We begin with the raw amino-acid sequence, 85 residues long: MKVTLIAILTCAAVLVLHTTAAEELEAESQLMEVGMPDTELAAVDEERLFERSVSCEIEKEGNKDCKKKKCKGGWKCKFNMCVKV.

Positions 1 to 22 (MKVTLIAILTCAAVLVLHTTAA) are cleaved as a signal peptide. Positions 23–48 (EELEAESQLMEVGMPDTELAAVDEER) are excised as a propeptide. Disulfide bonds link Cys56–Cys77 and Cys71–Cys82.

Belongs to the neurotoxin 12 (Hwtx-2) family. 02 (Hwtx-2) subfamily. As to expression, expressed by the venom gland.

It is found in the secreted. Postsynaptic neurotoxin. In Cyriopagopus hainanus (Chinese bird spider), this protein is U4-theraphotoxin-Hhn1ab.